The sequence spans 555 residues: (+)-delta-cadinene synthase isozyme A (555 aa).

Positions 1-22 (MASQASQVLASPHPAISSENRP) are disordered. 4 residues coordinate Mg(2+): Asp308, Asp312, Asp452, and Glu456. Positions 308-312 (DDTYD) match the DDXXD motif motif.

It belongs to the terpene synthase family. Mg(2+) serves as cofactor.

The catalysed reaction is (2E,6E)-farnesyl diphosphate = (1S,8aR)-delta-cadinene + diphosphate. It functions in the pathway secondary metabolite biosynthesis; terpenoid biosynthesis. Responsible for the cyclization of trans,trans-farnesyl diphosphate (FPP) to (+)-delta cadinene. The chain is (+)-delta-cadinene synthase isozyme A (CAD1-A) from Gossypium arboreum (Tree cotton).